The chain runs to 494 residues: Casein kinase I homolog HRR25 (494 aa).

A Protein kinase domain is found at 9–278; the sequence is FRIGRKIGSG…LARLFKDLSI (270 aa). ATP contacts are provided by residues 15-23 and Lys-38; that span reads IGSGSFGDI. Asp-128 serves as the catalytic Proton acceptor. Residue Ser-143 is modified to Phosphoserine. The segment at 394-494 is disordered; it reads RQQQPQQQVQ…DKPAGQSIWL (101 aa). Composition is skewed to low complexity over residues 395–418 and 432–444; these read QQQPQQQVQSSQPQPQPQQLQQQP and QQQQRDSQEQQQQ. Residues 445–479 show a composition bias toward polar residues; that stretch reads VPMATTRATQYPPQINSNNFNTNQASVPPQMRSNP.

This sequence belongs to the protein kinase superfamily. CK1 Ser/Thr protein kinase family. Casein kinase I subfamily. Interacts with HRI1. Interacts with ELP1/IKI3; the interaction leads to ELP1/IKI3 phosphorylation.

The protein localises to the cytoplasm. It is found in the nucleus. The protein resides in the nucleolus. It localises to the nucleoplasm. The catalysed reaction is L-seryl-[protein] + ATP = O-phospho-L-seryl-[protein] + ADP + H(+). It catalyses the reaction L-threonyl-[protein] + ATP = O-phospho-L-threonyl-[protein] + ADP + H(+). Functionally, protein kinase which phosphorylates serine and threonine residues. Can use casein as a substrate. Phosphorylates elongator complex member ELP1/IKI3 on 'Ser-1198' and 'Ser-1202' which promotes the tRNA modification function of the complex. Associated with repair of damaged DNA and meiosis. The chain is Casein kinase I homolog HRR25 (HRR25) from Saccharomyces cerevisiae (strain ATCC 204508 / S288c) (Baker's yeast).